The following is a 446-amino-acid chain: Tubulin beta-6 chain (446 aa).

An MREI motif motif is present at residues 1-4 (MREI). GTP is bound by residues Gln11, Glu69, Ser138, Gly142, Thr143, and Gly144. Glu69 is a Mg(2+) binding site. The residue at position 172 (Ser172) is a Phosphoserine; by CDK1. 2 residues coordinate GTP: Asn204 and Asn226. Position 438 is a 5-glutamyl polyglutamate (Glu438).

It belongs to the tubulin family. Dimer of alpha and beta chains. A typical microtubule is a hollow water-filled tube with an outer diameter of 25 nm and an inner diameter of 15 nM. Alpha-beta heterodimers associate head-to-tail to form protofilaments running lengthwise along the microtubule wall with the beta-tubulin subunit facing the microtubule plus end conferring a structural polarity. Microtubules usually have 13 protofilaments but different protofilament numbers can be found in some organisms and specialized cells. Requires Mg(2+) as cofactor. Post-translationally, some glutamate residues at the C-terminus are polyglutamylated, resulting in polyglutamate chains on the gamma-carboxyl group. Polyglutamylation plays a key role in microtubule severing by spastin (SPAST). SPAST preferentially recognizes and acts on microtubules decorated with short polyglutamate tails: severing activity by SPAST increases as the number of glutamates per tubulin rises from one to eight, but decreases beyond this glutamylation threshold. Glutamylation is also involved in cilia motility. Some glutamate residues at the C-terminus are monoglycylated but not polyglycylated due to the absence of functional TTLL10 in human. Monoglycylation is mainly limited to tubulin incorporated into cilia and flagella axonemes, which is required for their stability and maintenance. Flagella glycylation controls sperm motility. Both polyglutamylation and monoglycylation can coexist on the same protein on adjacent residues, and lowering glycylation levels increases polyglutamylation, and reciprocally. In terms of processing, phosphorylated on Ser-172 by CDK1 during the cell cycle, from metaphase to telophase, but not in interphase. This phosphorylation inhibits tubulin incorporation into microtubules. Ubiquitous. Maximal expression in breast and lung, where it represents around 10% of all beta-tubulins. Largely decreased expression in most cancerous tissues.

Its subcellular location is the cytoplasm. The protein resides in the cytoskeleton. Functionally, tubulin is the major constituent of microtubules, a cylinder consisting of laterally associated linear protofilaments composed of alpha- and beta-tubulin heterodimers. Microtubules grow by the addition of GTP-tubulin dimers to the microtubule end, where a stabilizing cap forms. Below the cap, tubulin dimers are in GDP-bound state, owing to GTPase activity of alpha-tubulin. In Homo sapiens (Human), this protein is Tubulin beta-6 chain (TUBB6).